We begin with the raw amino-acid sequence, 103 residues long: 11.2 kDa protein (103 aa).

This chain is 11.2 kDa protein, found in Pseudomonas phage Pf1 (Bacteriophage Pf1).